A 338-amino-acid polypeptide reads, in one-letter code: Dihydroorotate dehydrogenase (quinone) (338 aa).

Residues 59-63 (AGLDK) and T83 contribute to the FMN site. K63 contacts substrate. 108-112 (NRMGF) serves as a coordination point for substrate. FMN is bound by residues N136 and N169. N169 provides a ligand contact to substrate. S172 (nucleophile) is an active-site residue. N174 lines the substrate pocket. K214 and T242 together coordinate FMN. 243–244 (NT) is a substrate binding site. Residues G265, G294, and 315–316 (YS) each bind FMN.

It belongs to the dihydroorotate dehydrogenase family. Type 2 subfamily. As to quaternary structure, monomer. The cofactor is FMN.

It is found in the cell membrane. The catalysed reaction is (S)-dihydroorotate + a quinone = orotate + a quinol. It functions in the pathway pyrimidine metabolism; UMP biosynthesis via de novo pathway; orotate from (S)-dihydroorotate (quinone route): step 1/1. Its function is as follows. Catalyzes the conversion of dihydroorotate to orotate with quinone as electron acceptor. The chain is Dihydroorotate dehydrogenase (quinone) from Azoarcus sp. (strain BH72).